The chain runs to 140 residues: Acyl-coenzyme A thioesterase PaaI (140 aa).

In terms of assembly, homotetramer.

It participates in aromatic compound metabolism; phenylacetate degradation. In terms of biological role, thioesterase with a preference for ring-hydroxylated phenylacetyl-CoA esters. Hydrolyzes 3,4-dihydroxyphenylacetyl-CoA, 3-hydroxyphenylacetyl-CoA and 4-hydroxyphenylacetyl-CoA. Inactive towards 4-hydroxybenzoyl-CoA and 4-hydroxyphenacyl-CoA. The sequence is that of Acyl-coenzyme A thioesterase PaaI (paaI) from Escherichia coli (strain K12).